A 195-amino-acid chain; its full sequence is Putative EGF-like and EMI domain-containing protein 1 (195 aa).

Residues 86–97 (CTCKSGYQGNRC) enclose the EGF-like domain.

The protein is Putative EGF-like and EMI domain-containing protein 1 (EGFEM1P) of Homo sapiens (Human).